The following is a 264-amino-acid chain: Thymidylate synthase (264 aa).

Position 21 (Arg-21) interacts with dUMP. Position 51 (His-51) interacts with (6R)-5,10-methylene-5,6,7,8-tetrahydrofolate. 126-127 (RR) serves as a coordination point for dUMP. The active-site Nucleophile is the Cys-146. Residues 166 to 169 (RSAD), Asn-177, and 207 to 209 (HLY) contribute to the dUMP site. Asp-169 is a binding site for (6R)-5,10-methylene-5,6,7,8-tetrahydrofolate. Position 263 (Ala-263) interacts with (6R)-5,10-methylene-5,6,7,8-tetrahydrofolate.

The protein belongs to the thymidylate synthase family. Bacterial-type ThyA subfamily. Homodimer.

The protein resides in the cytoplasm. The catalysed reaction is dUMP + (6R)-5,10-methylene-5,6,7,8-tetrahydrofolate = 7,8-dihydrofolate + dTMP. Its pathway is pyrimidine metabolism; dTTP biosynthesis. In terms of biological role, catalyzes the reductive methylation of 2'-deoxyuridine-5'-monophosphate (dUMP) to 2'-deoxythymidine-5'-monophosphate (dTMP) while utilizing 5,10-methylenetetrahydrofolate (mTHF) as the methyl donor and reductant in the reaction, yielding dihydrofolate (DHF) as a by-product. This enzymatic reaction provides an intracellular de novo source of dTMP, an essential precursor for DNA biosynthesis. This Rhizobium johnstonii (strain DSM 114642 / LMG 32736 / 3841) (Rhizobium leguminosarum bv. viciae) protein is Thymidylate synthase.